The primary structure comprises 190 residues: Xanthine phosphoribosyltransferase (190 aa).

The xanthine site is built by L20 and N27. 128–132 provides a ligand contact to 5-phospho-alpha-D-ribose 1-diphosphate; sequence ANGHA. K156 lines the xanthine pocket.

This sequence belongs to the purine/pyrimidine phosphoribosyltransferase family. Xpt subfamily. Homodimer.

It localises to the cytoplasm. The catalysed reaction is XMP + diphosphate = xanthine + 5-phospho-alpha-D-ribose 1-diphosphate. The protein operates within purine metabolism; XMP biosynthesis via salvage pathway; XMP from xanthine: step 1/1. Converts the preformed base xanthine, a product of nucleic acid breakdown, to xanthosine 5'-monophosphate (XMP), so it can be reused for RNA or DNA synthesis. This chain is Xanthine phosphoribosyltransferase, found in Pseudomonas aeruginosa (strain LESB58).